The primary structure comprises 70 residues: Large ribosomal subunit protein uL29 (70 aa).

This sequence belongs to the universal ribosomal protein uL29 family.

The protein is Large ribosomal subunit protein uL29 of Symbiobacterium thermophilum (strain DSM 24528 / JCM 14929 / IAM 14863 / T).